The chain runs to 407 residues: Probable succinyl-diaminopimelate desuccinylase (407 aa).

Residue histidine 72 coordinates Zn(2+). Aspartate 74 is an active-site residue. Aspartate 105 lines the Zn(2+) pocket. Catalysis depends on glutamate 139, which acts as the Proton acceptor. Positions 140, 165, and 378 each coordinate Zn(2+).

The protein belongs to the peptidase M20A family. Zn(2+) is required as a cofactor. The cofactor is Co(2+).

It catalyses the reaction N-succinyl-(2S,6S)-2,6-diaminopimelate + H2O = (2S,6S)-2,6-diaminopimelate + succinate. The protein operates within amino-acid biosynthesis; L-lysine biosynthesis via DAP pathway; LL-2,6-diaminopimelate from (S)-tetrahydrodipicolinate (succinylase route): step 3/3. This Staphylococcus aureus (strain N315) protein is Probable succinyl-diaminopimelate desuccinylase (dapE).